Here is a 283-residue protein sequence, read N- to C-terminus: Bifunctional protein FolD 2 (283 aa).

NADP(+)-binding positions include 165 to 167 (GRG), threonine 192, and valine 233.

Belongs to the tetrahydrofolate dehydrogenase/cyclohydrolase family. In terms of assembly, homodimer.

The enzyme catalyses (6R)-5,10-methylene-5,6,7,8-tetrahydrofolate + NADP(+) = (6R)-5,10-methenyltetrahydrofolate + NADPH. The catalysed reaction is (6R)-5,10-methenyltetrahydrofolate + H2O = (6R)-10-formyltetrahydrofolate + H(+). Its pathway is one-carbon metabolism; tetrahydrofolate interconversion. Its function is as follows. Catalyzes the oxidation of 5,10-methylenetetrahydrofolate to 5,10-methenyltetrahydrofolate and then the hydrolysis of 5,10-methenyltetrahydrofolate to 10-formyltetrahydrofolate. The chain is Bifunctional protein FolD 2 from Nocardioides sp. (strain ATCC BAA-499 / JS614).